The primary structure comprises 76 residues: cAMP-dependent protein kinase inhibitor alpha (76 aa).

Thr2 carries the N-acetylthreonine modification. The interval 49-76 is disordered; it reads KTEGEEDAQRNSTEQSGEAQGEAAKSES.

It belongs to the PKI family.

Extremely potent competitive inhibitor of cAMP-dependent protein kinase activity, this protein interacts with the catalytic subunit of the enzyme after the cAMP-induced dissociation of its regulatory chains. The chain is cAMP-dependent protein kinase inhibitor alpha (PKIA) from Bos taurus (Bovine).